Consider the following 80-residue polypeptide: Large ribosomal subunit protein bL31B (80 aa).

Belongs to the bacterial ribosomal protein bL31 family. Type B subfamily. As to quaternary structure, part of the 50S ribosomal subunit.

This is Large ribosomal subunit protein bL31B from Xanthomonas axonopodis pv. citri (strain 306).